The primary structure comprises 185 residues: Elongation factor P (185 aa).

The protein belongs to the elongation factor P family.

Its subcellular location is the cytoplasm. The protein operates within protein biosynthesis; polypeptide chain elongation. Involved in peptide bond synthesis. Stimulates efficient translation and peptide-bond synthesis on native or reconstituted 70S ribosomes in vitro. Probably functions indirectly by altering the affinity of the ribosome for aminoacyl-tRNA, thus increasing their reactivity as acceptors for peptidyl transferase. The polypeptide is Elongation factor P (Syntrophomonas wolfei subsp. wolfei (strain DSM 2245B / Goettingen)).